Consider the following 389-residue polypeptide: LL-diaminopimelate aminotransferase (389 aa).

Residues Y16 and G41 each contribute to the substrate site. Residues Y70, 104–105 (SK), Y129, N179, Y210, and 239–241 (SLS) contribute to the pyridoxal 5'-phosphate site. The substrate site is built by K105, Y129, and N179. N6-(pyridoxal phosphate)lysine is present on K242. R250 contacts pyridoxal 5'-phosphate. R369 is a binding site for substrate.

The protein belongs to the class-I pyridoxal-phosphate-dependent aminotransferase family. LL-diaminopimelate aminotransferase subfamily. Homodimer. Pyridoxal 5'-phosphate serves as cofactor.

The enzyme catalyses (2S,6S)-2,6-diaminopimelate + 2-oxoglutarate = (S)-2,3,4,5-tetrahydrodipicolinate + L-glutamate + H2O + H(+). The protein operates within amino-acid biosynthesis; L-lysine biosynthesis via DAP pathway; LL-2,6-diaminopimelate from (S)-tetrahydrodipicolinate (aminotransferase route): step 1/1. In terms of biological role, involved in the synthesis of meso-diaminopimelate (m-DAP or DL-DAP), required for both lysine and peptidoglycan biosynthesis. Catalyzes the direct conversion of tetrahydrodipicolinate to LL-diaminopimelate. In Nitratidesulfovibrio vulgaris (strain DSM 19637 / Miyazaki F) (Desulfovibrio vulgaris), this protein is LL-diaminopimelate aminotransferase.